A 362-amino-acid polypeptide reads, in one-letter code: Phosphoglycolate phosphatase 1B, chloroplastic (362 aa).

The transit peptide at methionine 1–methionine 54 directs the protein to the chloroplast. Threonine 55 carries the N-acetylthreonine modification. Residue glutamate 80 is the Nucleophile of the active site. Serine 356 carries the post-translational modification Phosphoserine.

The protein belongs to the HAD-like hydrolase superfamily. CbbY/CbbZ/Gph/YieH family.

Its subcellular location is the plastid. The protein localises to the chloroplast. The enzyme catalyses 2-phosphoglycolate + H2O = glycolate + phosphate. In terms of biological role, photorespiratory enzyme that dephosphorylates the 2-phosphoglycolate produced by the RuBisCO oxygenation reaction. The protein is Phosphoglycolate phosphatase 1B, chloroplastic (PGLP1B) of Arabidopsis thaliana (Mouse-ear cress).